Consider the following 560-residue polypeptide: Arginine--tRNA ligase (560 aa).

The 'HIGH' region motif lies at 122-132 (ANPNGPLHIGH).

This sequence belongs to the class-I aminoacyl-tRNA synthetase family.

The protein resides in the cytoplasm. The catalysed reaction is tRNA(Arg) + L-arginine + ATP = L-arginyl-tRNA(Arg) + AMP + diphosphate. The protein is Arginine--tRNA ligase (argS) of Methanothermobacter thermautotrophicus (strain ATCC 29096 / DSM 1053 / JCM 10044 / NBRC 100330 / Delta H) (Methanobacterium thermoautotrophicum).